A 360-amino-acid chain; its full sequence is Heme A synthase (360 aa).

Helical transmembrane passes span 29 to 49, 111 to 131, 139 to 159, 175 to 195, 210 to 230, 269 to 289, 309 to 329, and 330 to 350; these read WLFL…ATRL, FLGR…WWTG, LGLV…WIMV, LAAH…LAAG, LTAL…GLVA, VALV…LALL, ALAG…LLAV, and PLWA…MAVA. H276 serves as a coordination point for heme. A heme-binding site is contributed by H337.

It belongs to the COX15/CtaA family. Type 2 subfamily. As to quaternary structure, interacts with CtaB. It depends on heme b as a cofactor.

The protein resides in the cell membrane. The catalysed reaction is Fe(II)-heme o + 2 A + H2O = Fe(II)-heme a + 2 AH2. The protein operates within porphyrin-containing compound metabolism; heme A biosynthesis; heme A from heme O: step 1/1. In terms of biological role, catalyzes the conversion of heme O to heme A by two successive hydroxylations of the methyl group at C8. The first hydroxylation forms heme I, the second hydroxylation results in an unstable dihydroxymethyl group, which spontaneously dehydrates, resulting in the formyl group of heme A. This chain is Heme A synthase, found in Methylobacterium sp. (strain 4-46).